The primary structure comprises 284 residues: GTP cyclohydrolase MptA (284 aa).

This sequence belongs to the GTP cyclohydrolase IV family. As to quaternary structure, homodimer. Fe(2+) is required as a cofactor.

It carries out the reaction GTP + H2O = 7,8-dihydroneopterin 2',3'-cyclic phosphate + formate + diphosphate + H(+). The protein operates within cofactor biosynthesis; 5,6,7,8-tetrahydromethanopterin biosynthesis. In terms of biological role, converts GTP to 7,8-dihydro-D-neopterin 2',3'-cyclic phosphate, the first intermediate in the biosynthesis of coenzyme methanopterin. The polypeptide is GTP cyclohydrolase MptA (Thermoplasma volcanium (strain ATCC 51530 / DSM 4299 / JCM 9571 / NBRC 15438 / GSS1)).